The primary structure comprises 200 residues: MTLVPMVVEQTSRGERAYDIYSRLLKERIIFITGPIEDQMASLVVAQLVFLEAENPEKEICMYINSPGGVVTAGLSIYDTMQYIKPKVSTLCLGQAASMGSLLLAAGEPGMRYALPNSRIMIHQPSGGFQGQATDIEIHAKEILDIKSRLNDIYVKHTGRDLPEVVANMERDNFMRAEKAKDFGIIDKVIEKRLDIEESN.

S98 serves as the catalytic Nucleophile. H123 is an active-site residue.

Belongs to the peptidase S14 family. As to quaternary structure, fourteen ClpP subunits assemble into 2 heptameric rings which stack back to back to give a disk-like structure with a central cavity, resembling the structure of eukaryotic proteasomes.

The protein resides in the cytoplasm. It catalyses the reaction Hydrolysis of proteins to small peptides in the presence of ATP and magnesium. alpha-casein is the usual test substrate. In the absence of ATP, only oligopeptides shorter than five residues are hydrolyzed (such as succinyl-Leu-Tyr-|-NHMec, and Leu-Tyr-Leu-|-Tyr-Trp, in which cleavage of the -Tyr-|-Leu- and -Tyr-|-Trp bonds also occurs).. Functionally, cleaves peptides in various proteins in a process that requires ATP hydrolysis. Has a chymotrypsin-like activity. Plays a major role in the degradation of misfolded proteins. The protein is ATP-dependent Clp protease proteolytic subunit of Ehrlichia canis (strain Jake).